Here is a 345-residue protein sequence, read N- to C-terminus: Phenylalanine--tRNA ligase alpha subunit (345 aa).

Glutamate 255 is a binding site for Mg(2+).

Belongs to the class-II aminoacyl-tRNA synthetase family. Phe-tRNA synthetase alpha subunit type 1 subfamily. As to quaternary structure, tetramer of two alpha and two beta subunits. Mg(2+) is required as a cofactor.

Its subcellular location is the cytoplasm. The enzyme catalyses tRNA(Phe) + L-phenylalanine + ATP = L-phenylalanyl-tRNA(Phe) + AMP + diphosphate + H(+). This is Phenylalanine--tRNA ligase alpha subunit from Lysinibacillus sphaericus (strain C3-41).